Here is a 129-residue protein sequence, read N- to C-terminus: Fluoride-specific ion channel FluC 2 (129 aa).

4 helical membrane-spanning segments follow: residues 4-24 (LDVMWVCLGGGVGSLGRWWIG), 39-59 (TFLINISGAFVIGYLSVLFGV), 65-85 (YGTMLNAGVLTGILGGYTTFS), and 104-124 (VFYLVASVLSGLFAAWLGAML). The Na(+) site is built by Gly79 and Thr82.

This sequence belongs to the fluoride channel Fluc/FEX (TC 1.A.43) family.

Its subcellular location is the cell inner membrane. The enzyme catalyses fluoride(in) = fluoride(out). With respect to regulation, na(+) is not transported, but it plays an essential structural role and its presence is essential for fluoride channel function. Functionally, fluoride-specific ion channel. Important for reducing fluoride concentration in the cell, thus reducing its toxicity. The protein is Fluoride-specific ion channel FluC 2 of Brucella abortus biovar 1 (strain 9-941).